Here is a 594-residue protein sequence, read N- to C-terminus: Parathyroid hormone/parathyroid hormone-related peptide receptor (594 aa).

The first 28 residues, 1–28 (MGTARIAPGLALLLCCPVLSSAYALVDA), serve as a signal peptide directing secretion. Residues 29 to 188 (DDVMTKEEQI…TREREVFDRL (160 aa)) lie on the Extracellular side of the membrane. 3 cysteine pairs are disulfide-bonded: C48–C117, C108–C149, and C132–C171. The tract at residues 66-102 (DKGWTSASTSGKPRKDKASGKLYPESEEDKEAPTDSR) is disordered. N152, N162, N167, and N177 each carry an N-linked (GlcNAc...) asparagine glycan. Residues 189–209 (GMIYTVGYSMSLASLTVAVLI) traverse the membrane as a helical segment. Over 210 to 223 (LAYFRRLHCTRNYI) the chain is Cytoplasmic. The chain crosses the membrane as a helical span at residues 224–244 (HMHLFLSFMLRAVSIFVKDAV). Residues 245–295 (LYSGATLDEAERLTEEELRAIAQAPPPPATAAAGYAGCRVAVTFFLYFLAT) lie on the Extracellular side of the membrane. The chain crosses the membrane as a helical span at residues 296-316 (NYYWILVEGLYLHSLIFMAFF). Over 317-319 (SEK) the chain is Cytoplasmic. Residues 320 to 340 (KYLWGFTVFGWGLPAVFVAVW) form a helical membrane-spanning segment. At 341–361 (VSVRATLANTGCWDLSSGNKK) the chain is on the extracellular side. Residues 362–382 (WIIQVPILASIVLHFILFINI) traverse the membrane as a helical segment. The Cytoplasmic portion of the chain corresponds to 383 to 405 (VRVLATKLRETNAGRCDTRQQYR). The helical transmembrane segment at 406 to 426 (KLLKSTLVLMPLFGVHYIVFM) threads the bilayer. At 427–440 (ATPYTEVSGTLWQV) the chain is on the extracellular side. Residues 441 to 461 (QMHYEMLFNSFQGFFVAIIYC) traverse the membrane as a helical segment. Residues 462 to 594 (FCNGEVQAEI…LLQEEWETVM (133 aa)) lie on the Cytoplasmic side of the membrane. The Important for interaction with G proteins signature appears at 475 to 478 (WSRW). The segment at 525–594 (PTATTNGHPQ…LLQEEWETVM (70 aa)) is disordered. Low complexity predominate over residues 543 to 558 (TPALETLETTPPATAA). A Phosphothreonine modification is found at T552.

It belongs to the G-protein coupled receptor 2 family. Homodimer in the absence of bound ligand. Peptide hormone binding leads to dissociation of the homodimer. Post-translationally, N-glycosylated.

Its subcellular location is the cell membrane. Functionally, G-protein-coupled receptor for parathyroid hormone (PTH) and for parathyroid hormone-related peptide (PTHLH). Ligand binding causes a conformation change that triggers signaling via guanine nucleotide-binding proteins (G proteins) and modulates the activity of downstream effectors, such as adenylate cyclase (cAMP). PTH1R is coupled to G(s) G alpha proteins and mediates activation of adenylate cyclase activity. PTHLH dissociates from PTH1R more rapidly than PTH; as consequence, the cAMP response induced by PTHLH decays faster than the response induced by PTH. This chain is Parathyroid hormone/parathyroid hormone-related peptide receptor (PTH1R), found in Pongo abelii (Sumatran orangutan).